A 330-amino-acid polypeptide reads, in one-letter code: MKIAVLGGGSWGTALAHLLAGKGEDVRLWVRDPAVVEGVNRDHENPRYLKGLHLHEALRATCDAGEALEGADILLSVVPCQQTRSVLRSLRPRLKSGMVVVSASKGIETDGLRTVGEMVEEELAGLAPRYAVISGPSFAAEVVAGMPTAVVLGCADRDLGGTLREVFSTPTFRTYSCTDVRGVELGGAVKNVIAIAAGLSDGLGFGSNARAGLITRGLAEMGRLGVALGARASTFMGLSGLGDLVLTCTGDLSRNRQVGLRLAAGQGLDAIVAGMGMVAEGVKTTEAVHALARREGADLPITRAMYAVLHDGRDPRDMVQELMTRELREE.

The NADPH site is built by serine 10, tryptophan 11, arginine 31, and lysine 105. Sn-glycerol 3-phosphate contacts are provided by lysine 105, glycine 135, and serine 137. Alanine 139 lines the NADPH pocket. Sn-glycerol 3-phosphate contacts are provided by lysine 190, aspartate 243, serine 253, arginine 254, and asparagine 255. Lysine 190 (proton acceptor) is an active-site residue. An NADPH-binding site is contributed by arginine 254. NADPH is bound by residues valine 278 and glutamate 280.

The protein belongs to the NAD-dependent glycerol-3-phosphate dehydrogenase family.

The protein resides in the cytoplasm. It catalyses the reaction sn-glycerol 3-phosphate + NAD(+) = dihydroxyacetone phosphate + NADH + H(+). It carries out the reaction sn-glycerol 3-phosphate + NADP(+) = dihydroxyacetone phosphate + NADPH + H(+). Its pathway is membrane lipid metabolism; glycerophospholipid metabolism. Its function is as follows. Catalyzes the reduction of the glycolytic intermediate dihydroxyacetone phosphate (DHAP) to sn-glycerol 3-phosphate (G3P), the key precursor for phospholipid synthesis. In Nitratidesulfovibrio vulgaris (strain DP4) (Desulfovibrio vulgaris), this protein is Glycerol-3-phosphate dehydrogenase [NAD(P)+].